Here is a 279-residue protein sequence, read N- to C-terminus: MEFIEWYPRGYGVAFKVKEKIFEGHSKFQKIEVYETEGFGRLLALDGTVQLVTEGEESYHESLVHPVMLAHPNPRRVLVIGGGDGGTIREVLRHEEVEEAIMVEIDEEVIEVAIKFIGIDGGLLDKMMKGECKRAKLIIGDGVEFIKENSGFDVVIVDSTDPVGPAKMLFSREFYERAYEALNDPGIYVTQAGSVYLFTDELVTAYENMSRVFDKVYAYSFPVIGYASPWAFLVGIKGDLDFRKIDLERAKKLNLKYYDPENHETIFQMPRYVREMLKP.

In terms of domain architecture, PABS spans 4 to 237 (IEWYPRGYGV…SPWAFLVGIK (234 aa)). An S-methyl-5'-thioadenosine-binding site is contributed by Q29. Residues H60 and D84 each contribute to the spermidine site. S-methyl-5'-thioadenosine contacts are provided by residues E104 and 141 to 142 (DG). D158 functions as the Proton acceptor in the catalytic mechanism. 158 to 161 (DSTD) provides a ligand contact to spermidine. P165 lines the S-methyl-5'-thioadenosine pocket.

This sequence belongs to the spermidine/spermine synthase family. Homodimer or homotetramer.

The protein resides in the cytoplasm. It catalyses the reaction S-adenosyl 3-(methylsulfanyl)propylamine + putrescine = S-methyl-5'-thioadenosine + spermidine + H(+). The protein operates within amine and polyamine biosynthesis; spermidine biosynthesis; spermidine from putrescine: step 1/1. Functionally, catalyzes the irreversible transfer of a propylamine group from the amino donor S-adenosylmethioninamine (decarboxy-AdoMet) to putrescine (1,4-diaminobutane) to yield spermidine. In Pyrococcus abyssi (strain GE5 / Orsay), this protein is Polyamine aminopropyltransferase.